A 194-amino-acid chain; its full sequence is Interferon alpha (194 aa).

Residues 1-23 (MALPSSFLVALVALGCNSVCSLG) form the signal peptide. Disulfide bonds link cysteine 24–cysteine 123 and cysteine 52–cysteine 166. An N-linked (GlcNAc...) asparagine glycan is attached at asparagine 102.

This sequence belongs to the alpha/beta interferon family.

Its subcellular location is the secreted. In terms of biological role, produced by macrophages, IFN-alpha have antiviral activities. Interferon stimulates the production of two enzymes: a protein kinase and an oligoadenylate synthetase. The polypeptide is Interferon alpha (Felis catus (Cat)).